The following is a 214-amino-acid chain: ATP phosphoribosyltransferase (214 aa).

This sequence belongs to the ATP phosphoribosyltransferase family. Short subfamily. Heteromultimer composed of HisG and HisZ subunits.

It is found in the cytoplasm. It catalyses the reaction 1-(5-phospho-beta-D-ribosyl)-ATP + diphosphate = 5-phospho-alpha-D-ribose 1-diphosphate + ATP. It participates in amino-acid biosynthesis; L-histidine biosynthesis; L-histidine from 5-phospho-alpha-D-ribose 1-diphosphate: step 1/9. Its function is as follows. Catalyzes the condensation of ATP and 5-phosphoribose 1-diphosphate to form N'-(5'-phosphoribosyl)-ATP (PR-ATP). Has a crucial role in the pathway because the rate of histidine biosynthesis seems to be controlled primarily by regulation of HisG enzymatic activity. The sequence is that of ATP phosphoribosyltransferase from Methylobacillus flagellatus (strain ATCC 51484 / DSM 6875 / VKM B-1610 / KT).